The sequence spans 886 residues: Alanine--tRNA ligase (886 aa).

Zn(2+) is bound by residues His-564, His-568, Cys-666, and His-670.

Belongs to the class-II aminoacyl-tRNA synthetase family. Requires Zn(2+) as cofactor.

The protein resides in the cytoplasm. The enzyme catalyses tRNA(Ala) + L-alanine + ATP = L-alanyl-tRNA(Ala) + AMP + diphosphate. Its function is as follows. Catalyzes the attachment of alanine to tRNA(Ala) in a two-step reaction: alanine is first activated by ATP to form Ala-AMP and then transferred to the acceptor end of tRNA(Ala). Also edits incorrectly charged Ser-tRNA(Ala) and Gly-tRNA(Ala) via its editing domain. The protein is Alanine--tRNA ligase of Prochlorococcus marinus (strain MIT 9515).